The following is a 335-amino-acid chain: Interleukin-12 subunit beta (335 aa).

The N-terminal stretch at 1 to 22 (MCPQKLTISWFAIVLLVSPLMA) is a signal peptide. Positions 23–106 (MWELEKDVYV…LSHSHLLLHK (84 aa)) constitute an Ig-like C2-type domain. A glycan (N-linked (GlcNAc...) asparagine) is linked at asparagine 47. Cysteines 50 and 90 form a disulfide. 3 N-linked (GlcNAc...) asparagine glycosylation sites follow: asparagine 122, asparagine 132, and asparagine 220. A Fibronectin type-III domain is found at 233 to 324 (PDPPKNLQMK…QDRYYNSSCS (92 aa)).

This sequence belongs to the IL-12B family. Heterodimer with IL12A; disulfide-linked. The heterodimer is known as interleukin IL-12. Heterodimer with IL23A; disulfide-linked. The heterodimer is known as interleukin IL-23. Also secreted as a monomer. Interacts with NBR1; this interaction promotes IL-12 secretion.

The protein localises to the secreted. In terms of biological role, cytokine that can act as a growth factor for activated T and NK cells, enhance the lytic activity of NK/lymphokine-activated killer cells, and stimulate the production of IFN-gamma by resting PBMC. Its function is as follows. Associates with IL23A to form the IL-23 interleukin, a heterodimeric cytokine which functions in innate and adaptive immunity. IL-23 may constitute with IL-17 an acute response to infection in peripheral tissues. IL-23 binds to a heterodimeric receptor complex composed of IL12RB1 and IL23R, activates the Jak-Stat signaling cascade, stimulates memory rather than naive T-cells and promotes production of pro-inflammatory cytokines. IL-23 induces autoimmune inflammation and thus may be responsible for autoimmune inflammatory diseases and may be important for tumorigenesis. The protein is Interleukin-12 subunit beta (Il12b) of Mus musculus (Mouse).